A 703-amino-acid polypeptide reads, in one-letter code: Arf-GAP with GTPase, ANK repeat and PH domain-containing protein 9 (703 aa).

Disordered stretches follow at residues 249–287 (KRNGGGSLNNYSSSIPPTPSTSQEDPQFSVPPTANTPTP), 299–323 (FTSEKGSDPDKERKAPENHADTIGS), and 427–449 (SSTTSPKLNPPPSPHANKKKHLK). Positions 271-286 (QEDPQFSVPPTANTPT) are enriched in polar residues. The span at 303–318 (KGSDPDKERKAPENHA) shows a compositional bias: basic and acidic residues. In terms of domain architecture, PH spans 327–488 (IPIKQGMLLK…WVQAIQSQIL (162 aa)). Positions 509–629 (AMALQSIQNM…LFLAPLPCTE (121 aa)) constitute an Arf-GAP domain. The C4-type zinc-finger motif lies at 524-547 (CVDCETQNPKWASLNLGVLMCIEC). An ANK repeat occupies 631–700 (SLGQQLLRAT…WTSWPEMPTG (70 aa)).

Belongs to the centaurin gamma-like family.

Its function is as follows. Putative GTPase-activating protein. The chain is Arf-GAP with GTPase, ANK repeat and PH domain-containing protein 9 (AGAP9) from Homo sapiens (Human).